A 412-amino-acid polypeptide reads, in one-letter code: Thyroxine-binding globulin (412 aa).

The signal sequence occupies residues 1-16 (MPLFLYMVLLVLGIHC). Residues Asn-20, Asn-35, Asn-98, Asn-164, and Asn-252 are each glycosylated (N-linked (GlcNAc...) asparagine). The thyroxine site is built by Asn-292 and Lys-395.

This sequence belongs to the serpin family. Expressed by the liver and secreted in plasma.

The protein resides in the secreted. Its function is as follows. Major thyroid hormone transport protein in serum. The chain is Thyroxine-binding globulin (SERPINA7) from Sus scrofa (Pig).